Consider the following 685-residue polypeptide: Putative lipase ROG1 (685 aa).

The active-site Charge relay system is the S269.

This sequence belongs to the putative lipase ROG1 family.

The polypeptide is Putative lipase ROG1 (ROG1) (Saccharomyces cerevisiae (strain ATCC 204508 / S288c) (Baker's yeast)).